The following is a 645-amino-acid chain: 1-deoxy-D-xylulose-5-phosphate synthase (645 aa).

Thiamine diphosphate is bound by residues His-83 and 124–126 (GHS). Asp-155 contacts Mg(2+). Thiamine diphosphate contacts are provided by residues 156–157 (GS), Asn-184, Tyr-295, and Glu-376. Asn-184 contributes to the Mg(2+) binding site.

The protein belongs to the transketolase family. DXPS subfamily. In terms of assembly, homodimer. Mg(2+) is required as a cofactor. The cofactor is thiamine diphosphate.

The enzyme catalyses D-glyceraldehyde 3-phosphate + pyruvate + H(+) = 1-deoxy-D-xylulose 5-phosphate + CO2. The protein operates within metabolic intermediate biosynthesis; 1-deoxy-D-xylulose 5-phosphate biosynthesis; 1-deoxy-D-xylulose 5-phosphate from D-glyceraldehyde 3-phosphate and pyruvate: step 1/1. Catalyzes the acyloin condensation reaction between C atoms 2 and 3 of pyruvate and glyceraldehyde 3-phosphate to yield 1-deoxy-D-xylulose-5-phosphate (DXP). This is 1-deoxy-D-xylulose-5-phosphate synthase from Desulfotalea psychrophila (strain LSv54 / DSM 12343).